Consider the following 253-residue polypeptide: Diphthine synthase (253 aa).

S-adenosyl-L-methionine is bound by residues aspartate 83, leucine 86, 111 to 112 (SI), leucine 163, and leucine 205.

This sequence belongs to the diphthine synthase family. As to quaternary structure, homodimer.

The enzyme catalyses 2-[(3S)-amino-3-carboxypropyl]-L-histidyl-[translation elongation factor 2] + 3 S-adenosyl-L-methionine = diphthine-[translation elongation factor 2] + 3 S-adenosyl-L-homocysteine + 3 H(+). It participates in protein modification; peptidyl-diphthamide biosynthesis. Its function is as follows. S-adenosyl-L-methionine-dependent methyltransferase that catalyzes the trimethylation of the amino group of the modified target histidine residue in translation elongation factor 2 (EF-2), to form an intermediate called diphthine. The three successive methylation reactions represent the second step of diphthamide biosynthesis. The chain is Diphthine synthase from Pyrobaculum neutrophilum (strain DSM 2338 / JCM 9278 / NBRC 100436 / V24Sta) (Thermoproteus neutrophilus).